Here is a 327-residue protein sequence, read N- to C-terminus: Glycerol-3-phosphate dehydrogenase [NAD(P)+] (327 aa).

3 residues coordinate NADPH: Phe13, Arg34, and Lys107. 2 residues coordinate sn-glycerol 3-phosphate: Lys107 and Gly135. Position 139 (Ala139) interacts with NADPH. Sn-glycerol 3-phosphate is bound by residues Lys190, Asp243, Ser253, Arg254, and Asn255. The active-site Proton acceptor is the Lys190. Arg254 is a binding site for NADPH. Residues Val276 and Glu277 each contribute to the NADPH site.

Belongs to the NAD-dependent glycerol-3-phosphate dehydrogenase family.

The protein resides in the cytoplasm. The enzyme catalyses sn-glycerol 3-phosphate + NAD(+) = dihydroxyacetone phosphate + NADH + H(+). It carries out the reaction sn-glycerol 3-phosphate + NADP(+) = dihydroxyacetone phosphate + NADPH + H(+). The protein operates within membrane lipid metabolism; glycerophospholipid metabolism. Catalyzes the reduction of the glycolytic intermediate dihydroxyacetone phosphate (DHAP) to sn-glycerol 3-phosphate (G3P), the key precursor for phospholipid synthesis. This Rhizobium etli (strain CIAT 652) protein is Glycerol-3-phosphate dehydrogenase [NAD(P)+].